A 301-amino-acid polypeptide reads, in one-letter code: Probable alpha-L-glutamate ligase (301 aa).

Positions 104–287 (LQLLSRKGIG…IAGIIIQYLE (184 aa)) constitute an ATP-grasp domain. ATP contacts are provided by residues Lys141, 178–179 (EY), Asp187, and 211–213 (RSN). Mg(2+)-binding residues include Asp248, Glu260, and Asn262. Residues Asp248, Glu260, and Asn262 each contribute to the Mn(2+) site.

This sequence belongs to the RimK family. The cofactor is Mg(2+). Mn(2+) serves as cofactor.

This chain is Probable alpha-L-glutamate ligase, found in Pseudomonas aeruginosa (strain UCBPP-PA14).